The primary structure comprises 464 residues: Heterogeneous nuclear ribonucleoprotein K (464 aa).

Met1 is modified (N-acetylmethionine). Residues 1–37 (METEQPEETFPNTETNGEFGKRPAEDMEEEQAFKRSR) are disordered. The tract at residues 1 to 276 (METEQPEETF…GRGGRPMPPS (276 aa)) is necessary for interaction with DDX1. Over residues 19-37 (FGKRPAEDMEEEQAFKRSR) the composition is skewed to basic and acidic residues. Lys34 is modified (N6-acetyllysine; alternate). Lys34 is covalently cross-linked (Glycyl lysine isopeptide (Lys-Gly) (interchain with G-Cter in SUMO1); alternate). Lys34 participates in a covalent cross-link: Glycyl lysine isopeptide (Lys-Gly) (interchain with G-Cter in SUMO2); alternate. At Ser36 the chain carries Phosphoserine. At Thr39 the chain carries Phosphothreonine. In terms of domain architecture, KH 1 spans 42–104 (MVELRILLQS…ETIGEILKKI (63 aa)). Glycyl lysine isopeptide (Lys-Gly) (interchain with G-Cter in SUMO2) cross-links involve residues Lys52 and Lys60. Repeat copies occupy residues 54–76 (AGAVIGKGGKNIKALRTDYNASV) and 59–62 (GKGG). The tract at residues 54–421 (AGAVIGKGGK…QIRHESGASI (368 aa)) is 2 X 22 AA approximate repeats. The segment at 59-407 (GKGGKNIKAL…LAGSIIGKGG (349 aa)) is 5 X 4 AA repeats of G-X-G-G. Phosphoserine is present on residues Ser75 and Ser116. The 66-residue stretch at 144–209 (DCELRLLIHQ…DRVVECIKII (66 aa)) folds into the KH 2 domain. Lys163 participates in a covalent cross-link: Glycyl lysine isopeptide (Lys-Gly) (interchain with G-Cter in SUMO1); alternate. Residue Lys163 forms a Glycyl lysine isopeptide (Lys-Gly) (interchain with G-Cter in SUMO2); alternate linkage. Position 198 is an N6-acetyllysine (Lys198). Residues 209–337 (ILDLISESPI…RPGDRYDGMV (129 aa)) form an interaction with ZIK1 region. Phosphoserine is present on residues Ser214 and Ser216. Lys219 participates in a covalent cross-link: Glycyl lysine isopeptide (Lys-Gly) (interchain with G-Cter in SUMO2); alternate. Lys219 bears the N6-succinyllysine; alternate mark. An RNA-binding RGG-box region spans residues 236 to 273 (YGGFTMMFDDRRGRPVGFPMRGRGGFDRMPPGRGGRPM). Repeat copies occupy residues 245 to 250 (DRRGRP), 257 to 260 (GRGG), and 267 to 270 (GRGG). The tract at residues 245–329 (DRRGRPVGFP…LMAYDRRGRP (85 aa)) is 2 X 6 AA approximate repeats. Residues 250 to 329 (PVGFPMRGRG…LMAYDRRGRP (80 aa)) are disordered. The segment covering 252–266 (GFPMRGRGGFDRMPP) has biased composition (low complexity). Positions 276-285 (SRRDYDDMSP) are enriched in basic and acidic residues. At Ser284 the chain carries Phosphoserine. The stretch at 295–298 (GRGG) is one 3-4 repeat. At Arg316 the chain carries Omega-N-methylarginine. One copy of the 2-2 repeat lies at 324–329 (DRRGRP). Arg377 carries the omega-N-methylarginine modification. Residue Ser379 is modified to Phosphoserine. The residue at position 380 (Tyr380) is a Phosphotyrosine. A KH 3 domain is found at 387-451 (IITTQVTIPK…DQIQNAQYLL (65 aa)). 2 repeat units span residues 399-421 (AGSIIGKGGQRIKQIRHESGASI) and 404-407 (GKGG). Residue Lys405 is modified to N6-acetyllysine; alternate. Lys405 is covalently cross-linked (Glycyl lysine isopeptide (Lys-Gly) (interchain with G-Cter in SUMO2); alternate). Ser420 is subject to Phosphoserine. Residue Lys422 forms a Glycyl lysine isopeptide (Lys-Gly) (interchain with G-Cter in SUMO1); alternate linkage. Lys422 is covalently cross-linked (Glycyl lysine isopeptide (Lys-Gly) (interchain with G-Cter in SUMO2); alternate). Lys422 participates in a covalent cross-link: Glycyl lysine isopeptide (Lys-Gly) (interchain with G-Cter in SUMO); alternate.

As to quaternary structure, identified in the spliceosome C complex. Interacts with ANKRD28, RBM42 and ZIK1. Interacts with DDX1. Interacts with MDM2; this interaction leads to ubiquitination and proteasomal degradation. Interacts with p53/TP53. Interacts with BRDT. Interacts with IVNS1ABP. Interacts with PPIA/CYPA. Part of a transcription inhibitory ribonucleoprotein complex composed at least of the circular RNA circZNF827, ZNF827 and HNRNPL. In terms of processing, sumoylated by CBX4. Sumoylation is increased upon DNA damage, such as that produced by doxorubicin, etoposide, UV light and camptothecin, due to enhanced CBX4 phosphorylation by HIPK2 under these conditions. Ubiquitinated by MDM2. Doxorubicin treatment does not affect monoubiquitination, but slightly decreases HNRNPK poly-ubiquitination. Post-translationally, O-glycosylated (O-GlcNAcylated), in a cell cycle-dependent manner.

Its subcellular location is the cytoplasm. It localises to the nucleus. The protein localises to the nucleoplasm. The protein resides in the cell projection. It is found in the podosome. One of the major pre-mRNA-binding proteins. Binds tenaciously to poly(C) sequences. Likely to play a role in the nuclear metabolism of hnRNAs, particularly for pre-mRNAs that contain cytidine-rich sequences. Can also bind poly(C) single-stranded DNA. Plays an important role in p53/TP53 response to DNA damage, acting at the level of both transcription activation and repression. When sumoylated, acts as a transcriptional coactivator of p53/TP53, playing a role in p21/CDKN1A and 14-3-3 sigma/SFN induction. As far as transcription repression is concerned, acts by interacting with long intergenic RNA p21 (lincRNA-p21), a non-coding RNA induced by p53/TP53. This interaction is necessary for the induction of apoptosis, but not cell cycle arrest. As part of a ribonucleoprotein complex composed at least of ZNF827, HNRNPL and the circular RNA circZNF827 that nucleates the complex on chromatin, may negatively regulate the transcription of genes involved in neuronal differentiation. The protein is Heterogeneous nuclear ribonucleoprotein K (HNRNPK) of Bos taurus (Bovine).